The following is a 529-amino-acid chain: CTP synthase (529 aa).

The segment at 1-266 is amidoligase domain; the sequence is MTKYIIVTGG…TKKIFNKLGL (266 aa). Ser-13 lines the CTP pocket. Ser-13 provides a ligand contact to UTP. Residue 14-19 coordinates ATP; it reads SVGKGT. Tyr-54 serves as a coordination point for L-glutamine. Asp-71 is a binding site for ATP. 2 residues coordinate Mg(2+): Asp-71 and Glu-141. CTP is bound by residues 148–150, 187–192, and Lys-223; these read DIE and KTKPLQ. Residues 187 to 192 and Lys-223 contribute to the UTP site; that span reads KTKPLQ. A Glutamine amidotransferase type-1 domain is found at 291-529; it reads KIALVGKYTK…FLNFLSVASA (239 aa). Position 354 (Gly-354) interacts with L-glutamine. The active-site Nucleophile; for glutamine hydrolysis is Cys-381. Residues 382–385, Glu-405, and Arg-462 contribute to the L-glutamine site; that span reads FGMQ. Active-site residues include His-506 and Glu-508.

The protein belongs to the CTP synthase family. Homotetramer.

It catalyses the reaction UTP + L-glutamine + ATP + H2O = CTP + L-glutamate + ADP + phosphate + 2 H(+). The catalysed reaction is L-glutamine + H2O = L-glutamate + NH4(+). The enzyme catalyses UTP + NH4(+) + ATP = CTP + ADP + phosphate + 2 H(+). Its pathway is pyrimidine metabolism; CTP biosynthesis via de novo pathway; CTP from UDP: step 2/2. Its activity is regulated as follows. Allosterically activated by GTP, when glutamine is the substrate; GTP has no effect on the reaction when ammonia is the substrate. The allosteric effector GTP functions by stabilizing the protein conformation that binds the tetrahedral intermediate(s) formed during glutamine hydrolysis. Inhibited by the product CTP, via allosteric rather than competitive inhibition. Its function is as follows. Catalyzes the ATP-dependent amination of UTP to CTP with either L-glutamine or ammonia as the source of nitrogen. Regulates intracellular CTP levels through interactions with the four ribonucleotide triphosphates. The chain is CTP synthase from Sulfolobus acidocaldarius (strain ATCC 33909 / DSM 639 / JCM 8929 / NBRC 15157 / NCIMB 11770).